The chain runs to 141 residues: Protein X (141 aa).

Over residues 24-48 (QSSGPPFPRPSAGSAASPASSLSAS) the composition is skewed to low complexity. Residues 24 to 51 (QSSGPPFPRPSAGSAASPASSLSASDES) form a disordered region. Residues 68 to 113 (PCCLVVTCAELRTMDSTVNFVSWHANRQLGMPSKDLWTPYIRDQLL) form a mitochondrial targeting sequence region.

Belongs to the orthohepadnavirus protein X family. In terms of assembly, may form homodimer. May interact with host CEBPA, CFLAR, CREB1, DDB1, E4F1, HBXIP, HSPD1/HSP60, NFKBIA, POLR2E and SMAD4. Interacts with host SMC5-SMC6 complex and induces its degradation. Interacts with host TRPC4AP; leading to prevent ubiquitination of TRPC4AP. Interacts with host PLSCR1; this interaction promotes ubiquitination and degradation of HBx and impairs HBx-mediated cell proliferation. Post-translationally, a fraction may be phosphorylated in insect cells and HepG2 cells, a human hepatoblastoma cell line. Phosphorylated in vitro by host protein kinase C or mitogen-activated protein kinase. N-acetylated in insect cells.

It localises to the host cytoplasm. The protein resides in the host nucleus. The protein localises to the host mitochondrion. Functionally, multifunctional protein that plays a role in silencing host antiviral defenses and promoting viral transcription. Does not seem to be essential for HBV infection. May be directly involved in development of cirrhosis and liver cancer (hepatocellular carcinoma). Most of cytosolic activities involve modulation of cytosolic calcium. The effect on apoptosis is controversial depending on the cell types in which the studies have been conducted. May induce apoptosis by localizing in mitochondria and causing loss of mitochondrial membrane potential. May also modulate apoptosis by binding host CFLAR, a key regulator of the death-inducing signaling complex (DISC). Promotes viral transcription by using the host E3 ubiquitin ligase DDB1 to target the SMC5-SMC6 complex to proteasomal degradation. This host complex would otherwise bind to viral episomal DNA, and prevents its transcription. Moderately stimulates transcription of many different viral and cellular transcription elements. Promoters and enhancers stimulated by HBx contain DNA binding sites for NF-kappa-B, AP-1, AP-2, c-EBP, ATF/CREB, or the calcium-activated factor NF-AT. In Woodchuck hepatitis B virus (isolate 1) (WHV), this protein is Protein X.